A 294-amino-acid polypeptide reads, in one-letter code: Nucleotide-binding protein A2cp1_0165 (294 aa).

17 to 24 (GVSGSGKS) is an ATP binding site. Residue 68–71 (DARE) coordinates GTP.

It belongs to the RapZ-like family.

Its function is as follows. Displays ATPase and GTPase activities. The polypeptide is Nucleotide-binding protein A2cp1_0165 (Anaeromyxobacter dehalogenans (strain 2CP-1 / ATCC BAA-258)).